The chain runs to 101 residues: Small ribosomal subunit protein uS14 (101 aa).

It belongs to the universal ribosomal protein uS14 family. Part of the 30S ribosomal subunit. Contacts proteins S3 and S10.

Binds 16S rRNA, required for the assembly of 30S particles and may also be responsible for determining the conformation of the 16S rRNA at the A site. The chain is Small ribosomal subunit protein uS14 from Burkholderia ambifaria (strain MC40-6).